Reading from the N-terminus, the 424-residue chain is Glutamyl-tRNA reductase (424 aa).

Substrate contacts are provided by residues 51-54 (TCNR), serine 99, 104-106 (EDQ), and glutamine 110. Residue cysteine 52 is the Nucleophile of the active site. Position 179–184 (179–184 (GGGEMG)) interacts with NADP(+).

This sequence belongs to the glutamyl-tRNA reductase family. In terms of assembly, homodimer.

It carries out the reaction (S)-4-amino-5-oxopentanoate + tRNA(Glu) + NADP(+) = L-glutamyl-tRNA(Glu) + NADPH + H(+). It participates in porphyrin-containing compound metabolism; protoporphyrin-IX biosynthesis; 5-aminolevulinate from L-glutamyl-tRNA(Glu): step 1/2. Its function is as follows. Catalyzes the NADPH-dependent reduction of glutamyl-tRNA(Glu) to glutamate 1-semialdehyde (GSA). In Methanocorpusculum labreanum (strain ATCC 43576 / DSM 4855 / Z), this protein is Glutamyl-tRNA reductase.